We begin with the raw amino-acid sequence, 99 residues long: MELVDPNLDPWNHPGSQPTTPCTRCYCKWCCFHCYWCFTTKGLGISYGRKKRRQRPRTPQSSQIHQDFVPKQPISQARGNPTGPKESKKEVESKAKTDP.

A disordered region spans residues 1-20; that stretch reads MELVDPNLDPWNHPGSQPTT. The interaction with human CREBBP stretch occupies residues 1–24; sequence MELVDPNLDPWNHPGSQPTTPCTR. The segment at 1–48 is transactivation; the sequence is MELVDPNLDPWNHPGSQPTTPCTRCYCKWCCFHCYWCFTTKGLGISYG. Positions 22, 25, and 27 each coordinate Zn(2+). The tract at residues 22–37 is cysteine-rich; it reads CTRCYCKWCCFHCYWC. Position 28 is an N6-acetyllysine; by host PCAF (Lys-28). Residues Cys-30, His-33, Cys-34, and Cys-37 each contribute to the Zn(2+) site. Residues 38 to 48 are core; that stretch reads FTTKGLGISYG. A disordered region spans residues 48–99; sequence GRKKRRQRPRTPQSSQIHQDFVPKQPISQARGNPTGPKESKKEVESKAKTDP. Residues 49–57 carry the Nuclear localization signal, RNA-binding (TAR), and protein transduction motif; sequence RKKRRQRPR. The interval 49–86 is interaction with the host capping enzyme RNGTT; it reads RKKRRQRPRTPQSSQIHQDFVPKQPISQARGNPTGPKE. 2 positions are modified to N6-acetyllysine; by host EP300 and GCN5L2: Lys-50 and Lys-51. 2 positions are modified to asymmetric dimethylarginine; by host PRMT6: Arg-52 and Arg-53. Lys-71 is covalently cross-linked (Glycyl lysine isopeptide (Lys-Gly) (interchain with G-Cter in ubiquitin)). Residues 85–99 are compositionally biased toward basic and acidic residues; the sequence is KESKKEVESKAKTDP.

It belongs to the lentiviruses Tat family. Interacts with host CCNT1. Associates with the P-TEFb complex composed at least of Tat, P-TEFb (CDK9 and CCNT1), TAR RNA, RNA Pol II. Recruits the HATs CREBBP, TAF1/TFIID, EP300, PCAF and GCN5L2. Interacts with host KAT5/Tip60; this interaction targets the latter to degradation. Interacts with the host deacetylase SIRT1. Interacts with host capping enzyme RNGTT; this interaction stimulates RNGTT. Binds to host KDR, and to the host integrins ITGAV/ITGB3 and ITGA5/ITGB1. Interacts with host KPNB1/importin beta-1 without previous binding to KPNA1/importin alpha-1. Interacts with EIF2AK2. Interacts with host nucleosome assembly protein NAP1L1; this interaction may be required for the transport of Tat within the nucleus, since the two proteins interact at the nuclear rim. Interacts with host C1QBP/SF2P32; this interaction involves lysine-acetylated Tat. Interacts with the host chemokine receptors CCR2, CCR3 and CXCR4. Interacts with host DPP4/CD26; this interaction may trigger an anti-proliferative effect. Interacts with host LDLR. Interacts with the host extracellular matrix metalloproteinase MMP1. Interacts with host PRMT6; this interaction mediates Tat's methylation. Interacts with, and is ubiquitinated by MDM2/Hdm2. Interacts with host PSMC3 and HTATIP2. Interacts with STAB1; this interaction may overcome SATB1-mediated repression of IL2 and IL2RA (interleukin) in T cells by binding to the same domain than HDAC1. Interacts (when acetylated) with human CDK13, thereby increasing HIV-1 mRNA splicing and promoting the production of the doubly spliced HIV-1 protein Nef. Interacts with host TBP; this interaction modulates the activity of transcriptional pre-initiation complex. Interacts with host RELA. Interacts with host PLSCR1; this interaction negatively regulates Tat transactivation activity by altering its subcellular distribution. Asymmetrical arginine methylation by host PRMT6 seems to diminish the transactivation capacity of Tat and affects the interaction with host CCNT1. In terms of processing, acetylation by EP300, CREBBP, GCN5L2/GCN5 and PCAF regulates the transactivation activity of Tat. EP300-mediated acetylation of Lys-50 promotes dissociation of Tat from the TAR RNA through the competitive binding to PCAF's bromodomain. In addition, the non-acetylated Tat's N-terminus can also interact with PCAF. PCAF-mediated acetylation of Lys-28 enhances Tat's binding to CCNT1. Lys-50 is deacetylated by SIRT1. Post-translationally, polyubiquitination by host MDM2 does not target Tat to degradation, but activates its transactivation function and fosters interaction with CCNT1 and TAR RNA. Phosphorylated by EIF2AK2 on serine and threonine residues adjacent to the basic region important for TAR RNA binding and function. Phosphorylation of Tat by EIF2AK2 is dependent on the prior activation of EIF2AK2 by dsRNA.

It is found in the host nucleus. The protein resides in the host nucleolus. Its subcellular location is the host cytoplasm. The protein localises to the secreted. Its function is as follows. Transcriptional activator that increases RNA Pol II processivity, thereby increasing the level of full-length viral transcripts. Recognizes a hairpin structure at the 5'-LTR of the nascent viral mRNAs referred to as the transactivation responsive RNA element (TAR) and recruits the cyclin T1-CDK9 complex (P-TEFb complex) that will in turn hyperphosphorylate the RNA polymerase II to allow efficient elongation. The CDK9 component of P-TEFb and other Tat-activated kinases hyperphosphorylate the C-terminus of RNA Pol II that becomes stabilized and much more processive. Other factors such as HTATSF1/Tat-SF1, SUPT5H/SPT5, and HTATIP2 are also important for Tat's function. Besides its effect on RNA Pol II processivity, Tat induces chromatin remodeling of proviral genes by recruiting the histone acetyltransferases (HATs) CREBBP, EP300 and PCAF to the chromatin. This also contributes to the increase in proviral transcription rate, especially when the provirus integrates in transcriptionally silent region of the host genome. To ensure maximal activation of the LTR, Tat mediates nuclear translocation of NF-kappa-B by interacting with host RELA. Through its interaction with host TBP, Tat may also modulate transcription initiation. Tat can reactivate a latently infected cell by penetrating in it and transactivating its LTR promoter. In the cytoplasm, Tat is thought to act as a translational activator of HIV-1 mRNAs. Extracellular circulating Tat can be endocytosed by surrounding uninfected cells via the binding to several surface receptors such as CD26, CXCR4, heparan sulfate proteoglycans (HSPG) or LDLR. Neurons are rarely infected, but they internalize Tat via their LDLR. Through its interaction with nuclear HATs, Tat is potentially able to control the acetylation-dependent cellular gene expression. Modulates the expression of many cellular genes involved in cell survival, proliferation or in coding for cytokines or cytokine receptors. Tat plays a role in T-cell and neurons apoptosis. Tat induced neurotoxicity and apoptosis probably contribute to neuroAIDS. Circulating Tat also acts as a chemokine-like and/or growth factor-like molecule that binds to specific receptors on the surface of the cells, affecting many cellular pathways. In the vascular system, Tat binds to ITGAV/ITGB3 and ITGA5/ITGB1 integrins dimers at the surface of endothelial cells and competes with bFGF for heparin-binding sites, leading to an excess of soluble bFGF. This Homo sapiens (Human) protein is Protein Tat.